Here is a 211-residue protein sequence, read N- to C-terminus: Guanylate kinase (211 aa).

In terms of domain architecture, Guanylate kinase-like spans 5–184 (GLLIVFSGPS…AAERVKRIIE (180 aa)). Residue 12–19 (GPSGVGKG) participates in ATP binding.

The protein belongs to the guanylate kinase family.

The protein resides in the cytoplasm. The enzyme catalyses GMP + ATP = GDP + ADP. Essential for recycling GMP and indirectly, cGMP. The sequence is that of Guanylate kinase from Streptococcus pyogenes serotype M1.